Consider the following 249-residue polypeptide: Probable transcriptional regulatory protein Sare_1779 (249 aa).

It belongs to the TACO1 family.

It is found in the cytoplasm. The sequence is that of Probable transcriptional regulatory protein Sare_1779 from Salinispora arenicola (strain CNS-205).